A 217-amino-acid polypeptide reads, in one-letter code: Large ribosomal subunit protein uL1 (217 aa).

Ser-2 is subject to N-acetylserine. Residue Tyr-11 is modified to Phosphotyrosine. Lys-91 and Lys-106 each carry N6-acetyllysine. Position 118 is an N6-acetyllysine; alternate (Lys-118). A Glycyl lysine isopeptide (Lys-Gly) (interchain with G-Cter in SUMO1); alternate cross-link involves residue Lys-118. Residue Lys-118 forms a Glycyl lysine isopeptide (Lys-Gly) (interchain with G-Cter in SUMO2); alternate linkage.

Belongs to the universal ribosomal protein uL1 family. As to quaternary structure, component of the large ribosomal subunit.

It localises to the cytoplasm. In terms of biological role, component of the large ribosomal subunit. The ribosome is a large ribonucleoprotein complex responsible for the synthesis of proteins in the cell. The protein is Large ribosomal subunit protein uL1 (RPL10A) of Macaca fascicularis (Crab-eating macaque).